Reading from the N-terminus, the 208-residue chain is ATP-dependent Clp protease proteolytic subunit 1 (208 aa).

The Nucleophile role is filled by Ser-108. Residue His-133 is part of the active site.

This sequence belongs to the peptidase S14 family. As to quaternary structure, fourteen ClpP subunits assemble into 2 heptameric rings which stack back to back to give a disk-like structure with a central cavity, resembling the structure of eukaryotic proteasomes.

The protein localises to the cytoplasm. The catalysed reaction is Hydrolysis of proteins to small peptides in the presence of ATP and magnesium. alpha-casein is the usual test substrate. In the absence of ATP, only oligopeptides shorter than five residues are hydrolyzed (such as succinyl-Leu-Tyr-|-NHMec, and Leu-Tyr-Leu-|-Tyr-Trp, in which cleavage of the -Tyr-|-Leu- and -Tyr-|-Trp bonds also occurs).. Cleaves peptides in various proteins in a process that requires ATP hydrolysis. Has a chymotrypsin-like activity. Plays a major role in the degradation of misfolded proteins. The protein is ATP-dependent Clp protease proteolytic subunit 1 of Corynebacterium glutamicum (strain ATCC 13032 / DSM 20300 / JCM 1318 / BCRC 11384 / CCUG 27702 / LMG 3730 / NBRC 12168 / NCIMB 10025 / NRRL B-2784 / 534).